Consider the following 522-residue polypeptide: BAR/IMD domain-containing adapter protein 2-like 2 (522 aa).

The 239-residue stretch at 1–239 (MAPEMDQFYR…HSPGLLGPAL (239 aa)) folds into the IMD domain. Disordered regions lie at residues 220–325 (SEAS…GGGG) and 404–502 (PMSP…GTNP). Phosphoserine is present on residues S231, S272, and S303. The span at 297–317 (RTPSASSLYASSTQRSRSNSF) shows a compositional bias: polar residues. The 64-residue stretch at 324–387 (GGARRVRALV…PEAYVKPVEE (64 aa)) folds into the SH3 domain. Residues 443–456 (SQSRSRTPSRVPSR) show a composition bias toward low complexity. Residues 457–466 (APSPAPPPLP) show a composition bias toward pro residues. Phosphoserine is present on residues S472 and S475.

As to expression, expressed in the epithelial layer of the intestine and in the kidney.

It localises to the cell membrane. The protein localises to the cell junction. It is found in the cytoplasmic vesicle membrane. Phosphoinositides-binding protein that induces the formation of planar or gently curved membrane structures. Binds to phosphoinositides, including to phosphatidylinositol 4,5-bisphosphate (PtdIns(4,5)P2) headgroups. There seems to be no clear preference for a specific phosphoinositide. The protein is BAR/IMD domain-containing adapter protein 2-like 2 (Baiap2l2) of Mus musculus (Mouse).